The chain runs to 377 residues: Carbonic anhydrase 1 (377 aa).

An N-terminal signal peptide occupies residues 1-20 (MARTGALLLVALALAGCAQA). Positions 38 to 318 (DHWDHGLNGE…HHHRRLLHNH (281 aa)) constitute an Alpha-carbonic anhydrase domain. Intrachain disulfides connect Cys61/Cys264, Cys194/Cys198, and Cys296/Cys351. The N-linked (GlcNAc...) asparagine glycan is linked to Asn101. His112 acts as the Proton acceptor in catalysis. N-linked (GlcNAc...) asparagine glycosylation is present at Asn135. The Zn(2+) site is built by His163, His165, and His182. Residues Thr260 and 260–261 (TT) each bind substrate. N-linked (GlcNAc...) asparagine glycosylation is present at Asn297.

Belongs to the alpha-carbonic anhydrase family. Tetramer of two large and two small subunits linked by two disulfide bonds. Requires Zn(2+) as cofactor.

Its subcellular location is the periplasm. It carries out the reaction hydrogencarbonate + H(+) = CO2 + H2O. Its function is as follows. Reversible hydration of carbon dioxide. The protein is Carbonic anhydrase 1 (CAH1) of Chlamydomonas reinhardtii (Chlamydomonas smithii).